We begin with the raw amino-acid sequence, 910 residues long: Disease resistance protein RPH8A (910 aa).

The stretch at 15–57 (DLLSRESERLQGIDEQLDGLKRQLRSLQSLLKDADAKKHGSDR) forms a coiled coil. The 314-residue stretch at 146 to 459 (RQRVQREIRQ…AEGIYDGSTI (314 aa)) folds into the NB-ARC domain. Position 192 to 199 (192 to 199 (GMGGIGKT)) interacts with ATP.

Belongs to the disease resistance NB-LRR family. RPP8/HRT subfamily.

Functionally, disease resistance protein. Resistance proteins guard the plant against pathogens that contain an appropriate avirulence protein via an indirect interaction with this avirulence protein. That triggers a defense system including the hypersensitive response, which restricts the pathogen growth. In contrast to RPP8, it does not specifically recognize the Emco5 avirulence protein from Hyaloperonospora parasitica. The protein is Disease resistance protein RPH8A (RPH8A) of Arabidopsis thaliana (Mouse-ear cress).